Consider the following 117-residue polypeptide: Large ribosomal subunit protein uL18 (117 aa).

The protein belongs to the universal ribosomal protein uL18 family. In terms of assembly, part of the 50S ribosomal subunit; part of the 5S rRNA/L5/L18/L25 subcomplex. Contacts the 5S and 23S rRNAs.

Its function is as follows. This is one of the proteins that bind and probably mediate the attachment of the 5S RNA into the large ribosomal subunit, where it forms part of the central protuberance. In Proteus mirabilis (strain HI4320), this protein is Large ribosomal subunit protein uL18.